The primary structure comprises 340 residues: Nitrilase (340 aa).

One can recognise a CN hydrolase domain in the interval 7–273 (IRAAAVQIAP…EGMVVADLDM (267 aa)). The active-site Proton acceptor is the Glu47. Lys129 is an active-site residue. Cys163 functions as the Nucleophile in the catalytic mechanism.

It belongs to the carbon-nitrogen hydrolase superfamily. Nitrilase family. Forms oligomers.

The catalysed reaction is a nitrile + 2 H2O = a carboxylate + NH4(+). It catalyses the reaction phenylpropanonitrile + 2 H2O = 3-phenylpropanoate + NH4(+). The enzyme catalyses an aliphatic nitrile + 2 H2O = a carboxylate + NH4(+). Its activity is regulated as follows. Highly resistant to various miscible cosolvents and tolerates high substrate concentrations. Its function is as follows. Catalyzes the hydrolysis of a broad range of nitriles to yield their corresponding carboxylic acid and ammonia. In vitro, shows high activity toward benzylic/unsaturated nitriles. The preferred substrate is trans-cinnamonitrile, followed by mono/di-cyanopyridines and aromatic substituted nitriles, with a moderate activity toward 3-phenylpropionitrile. Shows weaker activity toward the common dinitrile fumaronitrile. Also shows weak activity toward some aliphatic nitriles, including adiponitrile and glutaronitrile, and the arylacetonitrile 2-thiopheneacetonitrile. In Paraburkholderia phymatum (strain DSM 17167 / CIP 108236 / LMG 21445 / STM815) (Burkholderia phymatum), this protein is Nitrilase.